The sequence spans 816 residues: MSTVEPNAYDPQQVETSAQQFWDATRAFQVDENSDKPKFYCLSMLPYPSGALHMGHVRNYTISDVVSRYKRMTGHNVLQPMGWDAFGLPAENAAIKNKTAPAKWTYANIEHMRAQLKSLGYAIDWSREFATCTPDYYVHEQRMFTRLMRKGLAYRRNAVVNWDPIDQTVLANEQVIDGRGWRSGALVEKREIPQWFLRITDYAQELLDGLDQLDGWPDSVKTMQRNWIGRSEGLEIQFDVRDTTGAALDPLRVFTTRPDTLMGVTFVSIAAEHPLAQHAAKSNPELASMLETLKHGGVSEAELETQEKRGMATGLTAVHPISGEEVPVWVANFVLMGYGTGAVMAVPGHDQRDFEFANKYGLPIVQVVKLREPRNDDEQAWDATQWRDWYTDKSRELELINSAEFDGLDYHGAFEALAERFERKGQGQRRINYRLRDWGVSRQRYWGCPIPVIYCAKCGAVPVPEDQLPVVLPENVEFAGTGSPIKTDPTWRQTTCPECGGPAERETDTFDTFMESSWYVARYTSPNARDMVDRRANYWMPADLYVGGIEHAILHLMYFRFYHKLMRDARLVDSDEPVTNLLTQGMVIAETFYRDADNGGKDWINPADVEIQRDERGRVVGASLIADGQPVHIGGTEKMSKSKNNGVDPQAMVAKYGADTVRLFSMFAAPPEQSLEWNEAGVDGMARFMRRLWVQVHKHVGEGAAALDVASLSAEQKAIRRKTHETIGKVDDDYGRRHSFNTAIAAVMELSNALAKFDDASAQGRAVRQEALEAMVLLLNPITPHASHALWQVLGRGETLLENVPFPQVDAAGAGA.

Residues 46–56 (PYPSGALHMGH) carry the 'HIGH' region motif. The short motif at 638–642 (KMSKS) is the 'KMSKS' region element. Residue lysine 641 participates in ATP binding.

Belongs to the class-I aminoacyl-tRNA synthetase family.

The protein resides in the cytoplasm. The enzyme catalyses tRNA(Leu) + L-leucine + ATP = L-leucyl-tRNA(Leu) + AMP + diphosphate. The chain is Leucine--tRNA ligase from Xanthomonas campestris pv. campestris (strain ATCC 33913 / DSM 3586 / NCPPB 528 / LMG 568 / P 25).